A 432-amino-acid polypeptide reads, in one-letter code: Phosphoprotein associated with glycosphingolipid-enriched microdomains 1 (432 aa).

The Extracellular segment spans residues 1–16 (MGPAGSLLGSGQMQIT). A helical; Signal-anchor for type III membrane protein transmembrane segment spans residues 17-37 (LWGSLAAVAIFFVITFLIFLC). 2 S-palmitoyl cysteine lipidation sites follow: cysteine 37 and cysteine 40. At 38–432 (SSCDREKKPR…LQQGRDITRL (395 aa)) the chain is on the cytoplasmic side. Phosphoserine is present on residues serine 50 and serine 61. Phosphotyrosine; by LYN is present on tyrosine 105. Positions 110–122 (TSASDLLDSQDST) are enriched in polar residues. Positions 110-137 (TSASDLLDSQDSTGKPKCHQSRELPRIP) are disordered. A phosphotyrosine mark is found at tyrosine 163, tyrosine 181, and tyrosine 227. 2 disordered regions span residues 197–230 (EKGH…YASV) and 244–432 (SILG…ITRL). The span at 220–230 (GKAEFAEYASV) shows a compositional bias: basic and acidic residues. The residue at position 229 (serine 229) is a Phosphoserine. A compositionally biased stretch (polar residues) spans 316–356 (MYSSVNKPGQLVNKSGQSLTVPESTYTSIQGDPQRSPSSCN). Position 317 is a phosphotyrosine; by FYN and LYN (tyrosine 317). Positions 317–320 (YSSV) are interaction with CSK. Serine 354 is modified (phosphoserine). Tyrosine 359 is subject to Phosphotyrosine. A Phosphoserine modification is found at serine 380. Phosphotyrosine is present on residues tyrosine 387 and tyrosine 417. An interaction with NHERF1 region spans residues 430-432 (TRL).

Interacts with FYN. When phosphorylated, interacts with CSK. Interacts with NHERF1/EBP50. In resting T-cells, part of a PAG1-NHERF1-MSN complex which is disrupted upon TCR activation. Interacts with LYN on plasma membrane lipid rafts. Identified in a complex with LYN and STAT3. Post-translationally, palmitoylated. Phosphorylated by FYN on Tyr-317 in resting T-cells; which promotes interaction with CSK. Dephosphorylated by PTPRC/CD45 upon TCR activation; which leads to CSK dissociation. May also be dephosphorylated by PTPN11. Hyperphosphorylated in mast cells upon FCER1 activation. Phosphorylated by LYN. In terms of tissue distribution, ubiquitously expressed. Present in germinal center B-cells, plasma cells, T-cells, monocytes and platelets (at protein level).

It localises to the cell membrane. Functionally, negatively regulates TCR (T-cell antigen receptor)-mediated signaling in T-cells and FCER1 (high affinity immunoglobulin epsilon receptor)-mediated signaling in mast cells. Promotes CSK activation and recruitment to lipid rafts, which results in LCK inhibition. Inhibits immunological synapse formation by preventing dynamic arrangement of lipid raft proteins. May be involved in cell adhesion signaling. This Homo sapiens (Human) protein is Phosphoprotein associated with glycosphingolipid-enriched microdomains 1 (PAG1).